Consider the following 441-residue polypeptide: Monodehydroascorbate reductase 3 (441 aa).

FAD is bound by residues 14–17 (GGVA), glutamate 41, arginine 48, lysine 53, isoleucine 96, and 147–148 (RE). NAD(+)-binding positions include 173-179 (GGFLGLE), glutamate 197, arginine 203, and glycine 262. NADP(+) is bound at residue 175–179 (FLGLE). Arginine 203 and glycine 262 together coordinate NADP(+). Residue aspartate 299 participates in FAD binding. NAD(+) is bound at residue 315-316 (EH). 315-316 (EH) serves as a coordination point for NADP(+). Arginine 321 contributes to the L-ascorbate binding site. Tyrosine 350 contributes to the FAD binding site. Tyrosine 350 contributes to the NAD(+) binding site. Residue tyrosine 350 participates in NADP(+) binding. L-ascorbate is bound at residue arginine 352. Serine 418 is modified (phosphoserine).

Belongs to the FAD-dependent oxidoreductase family. Requires FAD as cofactor.

The protein resides in the cytoplasm. It carries out the reaction 2 monodehydro-L-ascorbate radical + NADH + H(+) = 2 L-ascorbate + NAD(+). Its function is as follows. Catalyzes the conversion of monodehydroascorbate to ascorbate, oxidizing NADH in the process. Required for producing sufficient ascorbate to maintain the interaction between Piriformospora indica and Arabidopsis in a mutualistic state. The chain is Monodehydroascorbate reductase 3 from Arabidopsis thaliana (Mouse-ear cress).